Reading from the N-terminus, the 952-residue chain is Plasma membrane ATPase 4 (952 aa).

Over 1–64 (MAKAISLEEI…EKNESKILKF (64 aa)) the chain is Cytoplasmic. The helical transmembrane segment at 65 to 84 (LGFMWNPLSWVMEAAAVMAI) threads the bilayer. Residues 85 to 96 (ALANGDGKPPDW) are Extracellular-facing. A helical transmembrane segment spans residues 97–117 (QDFIGIICLLVINSTISFIEE). Over 118–246 (NNAGNAAAAL…GHFQKVLTAI (129 aa)) the chain is Cytoplasmic. Residues 247-267 (GNFCICSIAIGMLVEIIVMYP) form a helical membrane-spanning segment. The Extracellular segment spans residues 268–277 (IQHRKYRDGI). A helical transmembrane segment spans residues 278-299 (DNLLVLLIGGIPIAMPTVLSVT). The Cytoplasmic portion of the chain corresponds to 300–646 (MAIGSHRLSQ…TSRAIFQRMK (347 aa)). Asp-332 functions as the 4-aspartylphosphate intermediate in the catalytic mechanism. Mg(2+) contacts are provided by Asp-591 and Asp-595. Residues 647-668 (NYTIYAVSITIRIVFGFMFIAL) traverse the membrane as a helical segment. Topologically, residues 669-673 (IWKYD) are extracellular. The chain crosses the membrane as a helical span at residues 674 to 696 (FSAFMVLIIAILNDGTIMTISKD). Over 697–712 (RVKPSPMPDSWKLKEI) the chain is Cytoplasmic. Residues 713-733 (FATGVVLGGYQALMTVVFFWA) traverse the membrane as a helical segment. Residues 734 to 754 (MHDTDFFSDKFGVKSLRNSDE) are Extracellular-facing. The chain crosses the membrane as a helical span at residues 755–775 (EMMSALYLQVSIISQALIFVT). The Cytoplasmic portion of the chain corresponds to 776–787 (RSRSWSFLERPG). A helical membrane pass occupies residues 788-808 (MLLVIAFMIAQLVATLIAVYA). At 809–817 (NWAFARVKG) the chain is on the extracellular side. The chain crosses the membrane as a helical span at residues 818-838 (CGWGWAGVIWLYSIIFYLPLD). The Cytoplasmic portion of the chain corresponds to 839–952 (IMKFAIRYIL…IETIQQHYTV (114 aa)).

This sequence belongs to the cation transport ATPase (P-type) (TC 3.A.3) family. Type IIIA subfamily. As to expression, expressed at high levels in root, stem, leaf and flower.

It is found in the cell membrane. The catalysed reaction is ATP + H2O + H(+)(in) = ADP + phosphate + 2 H(+)(out). The plasma membrane ATPase of plants and fungi is a hydrogen ion pump. The proton gradient it generates drives the active transport of nutrients by H(+)-symport. The resulting external acidification and/or internal alkinization may mediate growth responses. The chain is Plasma membrane ATPase 4 (PMA4) from Nicotiana plumbaginifolia (Leadwort-leaved tobacco).